We begin with the raw amino-acid sequence, 178 residues long: Cytidylate kinase 2 (178 aa).

7-15 (GKSGCGNTT) is an ATP binding site.

Belongs to the cytidylate kinase family. Type 2 subfamily.

Its subcellular location is the cytoplasm. The enzyme catalyses CMP + ATP = CDP + ADP. It catalyses the reaction dCMP + ATP = dCDP + ADP. In Borreliella afzelii (strain PKo) (Borrelia afzelii), this protein is Cytidylate kinase 2.